The sequence spans 23 residues: Maculatin-1.2 (23 aa).

A23 is subject to Alanine amide.

In terms of tissue distribution, expressed by the skin dorsal glands.

Its subcellular location is the secreted. Shows antibacterial activity against S.aureus and S.uberis. This Ranoidea genimaculata (Brown-spotted tree frog) protein is Maculatin-1.2.